A 115-amino-acid polypeptide reads, in one-letter code: Probable 4-amino-4-deoxy-L-arabinose-phosphoundecaprenol flippase subunit ArnE (115 aa).

The next 3 helical transmembrane spans lie at 42–62 (PWPWLALLALGLGLLCWLLLL), 65–85 (VEVGSAYPMLALNFVLVTLAA), and 93–112 (VDRRHLAGLLLIVAGVALLG). Residues 46-113 (LALLALGLGL…IVAGVALLGR (68 aa)) form the EamA domain.

Belongs to the ArnE family. As to quaternary structure, heterodimer of ArnE and ArnF.

Its subcellular location is the cell inner membrane. It participates in bacterial outer membrane biogenesis; lipopolysaccharide biosynthesis. In terms of biological role, translocates 4-amino-4-deoxy-L-arabinose-phosphoundecaprenol (alpha-L-Ara4N-phosphoundecaprenol) from the cytoplasmic to the periplasmic side of the inner membrane. In Pseudomonas aeruginosa (strain LESB58), this protein is Probable 4-amino-4-deoxy-L-arabinose-phosphoundecaprenol flippase subunit ArnE.